The chain runs to 492 residues: Sestrin-1 (492 aa).

An N-terminal domain; may mediate the alkylhydroperoxide reductase activity region spans residues 71-252 (FADSFAALGR…ICDITNGNHS (182 aa)). C130 serves as the catalytic Cysteine sulfenic acid (-SOH) intermediate. Residues S293 and S314 each carry the phosphoserine modification. A C-terminal domain; mediates TORC1 regulation region spans residues 321–492 (PARDVSRHFE…ALRAITRYMT (172 aa)). L-leucine-binding positions include 386 to 389 (TYNT), T398, and E463.

This sequence belongs to the sestrin family. As to quaternary structure, interacts with the GATOR2 complex which is composed of MIOS, SEC13, SEH1L, WDR24 and WDR59; the interaction is negatively regulated by leucine. Interacts with RRAGA, RRAGB, RRAGC and RRAGD; may function as a guanine nucleotide dissociation inhibitor for RRAGs and regulate them. Interacts with KEAP1, RBX1 and SQSTM1; in the SQSTM1-dependent autophagic degradation of KEAP1. May interact with PRDX1.

The protein resides in the nucleus. It is found in the cytoplasm. It catalyses the reaction a hydroperoxide + L-cysteinyl-[protein] = S-hydroxy-L-cysteinyl-[protein] + an alcohol. Functionally, functions as an intracellular leucine sensor that negatively regulates the TORC1 signaling pathway through the GATOR complex. In absence of leucine, binds the GATOR subcomplex GATOR2 and prevents TORC1 signaling. Binding of leucine to SESN2 disrupts its interaction with GATOR2 thereby activating the TORC1 signaling pathway. This stress-inducible metabolic regulator may also play a role in protection against oxidative and genotoxic stresses. May positively regulate the transcription by NFE2L2 of genes involved in the response to oxidative stress by facilitating the SQSTM1-mediated autophagic degradation of KEAP1. Moreover, may prevent the accumulation of reactive oxygen species (ROS) through the alkylhydroperoxide reductase activity born by the N-terminal domain of the protein. Was originally reported to contribute to oxidative stress resistance by reducing PRDX1. However, this could not be confirmed. This is Sestrin-1 from Macaca fascicularis (Crab-eating macaque).